The sequence spans 759 residues: Hormone-sensitive lipase (759 aa).

The short motif at 349-351 is the Involved in the stabilization of the negatively charged intermediate by the formation of the oxyanion hole element; it reads HGG. The active site involves serine 423. Residues 534–553 are disordered; that stretch reads GRKPQKTTSPTAESVRPTES. Serine 557 is modified (phosphoserine). Serine 559 is subject to Phosphoserine; by AMPK. Threonine 574 bears the Phosphothreonine mark. A disordered region spans residues 583 to 604; the sequence is LSNSEPSDSPEMSQSMETLGPS. Residues 585–604 show a composition bias toward polar residues; it reads NSEPSDSPEMSQSMETLGPS. Phosphoserine is present on residues serine 597, serine 618, serine 650, and serine 651. Catalysis depends on residues aspartate 694 and histidine 724.

The protein belongs to the 'GDXG' lipolytic enzyme family. In terms of assembly, monomer and homodimer. Interacts with CAVIN1 in the adipocyte cytoplasm. Interacts with PLIN5. Post-translationally, phosphorylation by AMPK reduces its translocation towards the lipid droplets.

It is found in the cell membrane. It localises to the membrane. Its subcellular location is the caveola. The protein resides in the cytoplasm. The protein localises to the cytosol. It is found in the lipid droplet. It carries out the reaction a diacylglycerol + H2O = a monoacylglycerol + a fatty acid + H(+). The catalysed reaction is a triacylglycerol + H2O = a diacylglycerol + a fatty acid + H(+). It catalyses the reaction a monoacylglycerol + H2O = glycerol + a fatty acid + H(+). The enzyme catalyses Hydrolyzes glycerol monoesters of long-chain fatty acids.. It carries out the reaction cholesteryl (9Z-octadecenoate) + H2O = cholesterol + (9Z)-octadecenoate + H(+). The catalysed reaction is all-trans-retinyl hexadecanoate + H2O = all-trans-retinol + hexadecanoate + H(+). It catalyses the reaction 1,2-di-(9Z-octadecenoyl)-glycerol + H2O = (9Z-octadecenoyl)-glycerol + (9Z)-octadecenoate + H(+). The enzyme catalyses 2-(5Z,8Z,11Z,14Z-eicosatetraenoyl)-glycerol + H2O = glycerol + (5Z,8Z,11Z,14Z)-eicosatetraenoate + H(+). It carries out the reaction 1-(9Z-octadecenoyl)-glycerol + H2O = glycerol + (9Z)-octadecenoate + H(+). The catalysed reaction is 2-(9Z-octadecenoyl)-glycerol + H2O = glycerol + (9Z)-octadecenoate + H(+). It catalyses the reaction 1-O-hexadecyl-2-acetyl-sn-glycerol + H2O = 1-O-hexadecyl-sn-glycerol + acetate + H(+). The enzyme catalyses 1,2-di-(9Z-octadecenoyl)-sn-glycerol + H2O = (9Z-octadecenoyl)-glycerol + (9Z)-octadecenoate + H(+). It carries out the reaction 1,3-di-(9Z-octadecenoyl)-glycerol + H2O = 1-(9Z-octadecenoyl)-glycerol + (9Z)-octadecenoate + H(+). The catalysed reaction is 1,2-di-(9Z-octadecenoyl)-glycerol + (9Z)-octadecenoate + H(+) = 1,2,3-tri-(9Z-octadecenoyl)-glycerol + H2O. It catalyses the reaction 2,3-di-(9Z)-octadecenoyl-sn-glycerol + H2O = 2-(9Z-octadecenoyl)-glycerol + (9Z)-octadecenoate + H(+). The enzyme catalyses 1,2,3-tri-(9Z-octadecenoyl)-glycerol + H2O = di-(9Z)-octadecenoylglycerol + (9Z)-octadecenoate + H(+). It carries out the reaction 1,2-di-(9Z-octadecenoyl)-glycerol + H2O = 2-(9Z-octadecenoyl)-glycerol + (9Z)-octadecenoate + H(+). The protein operates within glycerolipid metabolism; triacylglycerol degradation. Lipase with broad substrate specificity, catalyzing the hydrolysis of triacylglycerols (TAGs), diacylglycerols (DAGs), monoacylglycerols (MAGs), cholesteryl esters and retinyl esters. Shows a preferential hydrolysis of DAGs over TAGs and MAGs and of the fatty acid (FA) esters at the sn-1 and sn-2 positions of the glycerol backbone in TAGs. Preferentially hydrolyzes FA esters at the sn-3 position of the glycerol backbone in DAGs. Catalyzes the hydrolysis of 2-arachidonoylglycerol, an endocannabinoid and of 2-acetyl monoalkylglycerol ether, the penultimate precursor of the pathway for de novo synthesis of platelet-activating factor. In adipose tissue and heart, it primarily hydrolyzes stored triglycerides to free fatty acids, while in steroidogenic tissues, it principally converts cholesteryl esters to free cholesterol for steroid hormone production. This chain is Hormone-sensitive lipase (Lipe), found in Mus musculus (Mouse).